Reading from the N-terminus, the 279-residue chain is Putative pyruvate, phosphate dikinase regulatory protein (279 aa).

153–160 lines the ADP pocket; that stretch reads GVSRTSKT.

Belongs to the pyruvate, phosphate/water dikinase regulatory protein family. PDRP subfamily.

The catalysed reaction is N(tele)-phospho-L-histidyl/L-threonyl-[pyruvate, phosphate dikinase] + ADP = N(tele)-phospho-L-histidyl/O-phospho-L-threonyl-[pyruvate, phosphate dikinase] + AMP + H(+). It carries out the reaction N(tele)-phospho-L-histidyl/O-phospho-L-threonyl-[pyruvate, phosphate dikinase] + phosphate + H(+) = N(tele)-phospho-L-histidyl/L-threonyl-[pyruvate, phosphate dikinase] + diphosphate. Functionally, bifunctional serine/threonine kinase and phosphorylase involved in the regulation of the pyruvate, phosphate dikinase (PPDK) by catalyzing its phosphorylation/dephosphorylation. In Rhodopseudomonas palustris (strain BisA53), this protein is Putative pyruvate, phosphate dikinase regulatory protein.